A 425-amino-acid chain; its full sequence is Serine--tRNA ligase (425 aa).

230–232 (TAE) is a binding site for L-serine. Position 261–263 (261–263 (RSE)) interacts with ATP. Residue E284 participates in L-serine binding. 348–351 (EISS) is a binding site for ATP. S384 contributes to the L-serine binding site.

The protein belongs to the class-II aminoacyl-tRNA synthetase family. Type-1 seryl-tRNA synthetase subfamily. As to quaternary structure, homodimer. The tRNA molecule binds across the dimer.

It localises to the cytoplasm. The catalysed reaction is tRNA(Ser) + L-serine + ATP = L-seryl-tRNA(Ser) + AMP + diphosphate + H(+). The enzyme catalyses tRNA(Sec) + L-serine + ATP = L-seryl-tRNA(Sec) + AMP + diphosphate + H(+). Its pathway is aminoacyl-tRNA biosynthesis; selenocysteinyl-tRNA(Sec) biosynthesis; L-seryl-tRNA(Sec) from L-serine and tRNA(Sec): step 1/1. Its function is as follows. Catalyzes the attachment of serine to tRNA(Ser). Is also able to aminoacylate tRNA(Sec) with serine, to form the misacylated tRNA L-seryl-tRNA(Sec), which will be further converted into selenocysteinyl-tRNA(Sec). This chain is Serine--tRNA ligase, found in Streptococcus pyogenes serotype M6 (strain ATCC BAA-946 / MGAS10394).